Here is a 114-residue protein sequence, read N- to C-terminus: Iron-sulfur cluster insertion protein ErpA (114 aa).

Residues C42, C106, and C108 each coordinate iron-sulfur cluster.

It belongs to the HesB/IscA family. In terms of assembly, homodimer. Requires iron-sulfur cluster as cofactor.

In terms of biological role, required for insertion of 4Fe-4S clusters for at least IspG. This chain is Iron-sulfur cluster insertion protein ErpA, found in Pasteurella multocida (strain Pm70).